Here is an 85-residue protein sequence, read N- to C-terminus: Protein RnfH (85 aa).

This sequence belongs to the UPF0125 (RnfH) family.

The polypeptide is Protein RnfH (Cereibacter sphaeroides (strain ATCC 17029 / ATH 2.4.9) (Rhodobacter sphaeroides)).